Consider the following 208-residue polypeptide: Uracil phosphoribosyltransferase (208 aa).

Residues Arg-77, Arg-102, and Asp-129 to Ser-137 each bind 5-phospho-alpha-D-ribose 1-diphosphate. Residues Ile-193 and Gly-198–Ala-200 each bind uracil. Asp-199 is a 5-phospho-alpha-D-ribose 1-diphosphate binding site.

Belongs to the UPRTase family. The cofactor is Mg(2+).

It catalyses the reaction UMP + diphosphate = 5-phospho-alpha-D-ribose 1-diphosphate + uracil. The protein operates within pyrimidine metabolism; UMP biosynthesis via salvage pathway; UMP from uracil: step 1/1. Allosterically activated by GTP. In terms of biological role, catalyzes the conversion of uracil and 5-phospho-alpha-D-ribose 1-diphosphate (PRPP) to UMP and diphosphate. This is Uracil phosphoribosyltransferase from Mycoplasmopsis agalactiae (strain NCTC 10123 / CIP 59.7 / PG2) (Mycoplasma agalactiae).